The primary structure comprises 254 residues: 3-deoxy-manno-octulosonate cytidylyltransferase (254 aa).

Belongs to the KdsB family.

It is found in the cytoplasm. The enzyme catalyses 3-deoxy-alpha-D-manno-oct-2-ulosonate + CTP = CMP-3-deoxy-beta-D-manno-octulosonate + diphosphate. It functions in the pathway nucleotide-sugar biosynthesis; CMP-3-deoxy-D-manno-octulosonate biosynthesis; CMP-3-deoxy-D-manno-octulosonate from 3-deoxy-D-manno-octulosonate and CTP: step 1/1. The protein operates within bacterial outer membrane biogenesis; lipopolysaccharide biosynthesis. In terms of biological role, activates KDO (a required 8-carbon sugar) for incorporation into bacterial lipopolysaccharide in Gram-negative bacteria. The chain is 3-deoxy-manno-octulosonate cytidylyltransferase from Pseudomonas syringae pv. tomato (strain ATCC BAA-871 / DC3000).